Here is a 301-residue protein sequence, read N- to C-terminus: Transposase InsD for insertion element IS2D (301 aa).

Residues Lys106–Ala289 form the Integrase catalytic domain.

In terms of biological role, involved in the transposition of the insertion sequence IS2. The protein is Transposase InsD for insertion element IS2D (insD2) of Escherichia coli (strain K12).